A 616-amino-acid polypeptide reads, in one-letter code: Cytochrome c oxidase subunit 1 (616 aa).

A helical transmembrane segment spans residues 28–48 (HLYLISGGFFFLLGGLEALFI). A Fe(II)-heme a-binding site is contributed by His-72. Transmembrane regions (helical) follow at residues 75-95 (TMIFLAAMPLVFAFMNAVVPL), 102-122 (VAFPFLNALGFWMFFFGGLFL), 158-178 (GLQISGFGTIMGAINFLVTII), 198-218 (FVTSALILFAFPPLTVGLIFM), 243-263 (LFWVFGHPEVYILVLPAFGIF), and 275-295 (LFGYSSMVFATVLIAFLGFMV). Positions 249 and 253 each coordinate Cu cation. Positions 249 to 253 (HPEVY) form a cross-link, 1'-histidyl-3'-tyrosine (His-Tyr). His-298 and His-299 together coordinate Cu cation. 7 helical membrane passes run 303–323 (VGMGPIANAIFAVATMTIAVP), 349–369 (AVAFIPSFVMGGVTGVMLASA), 380–400 (FVVAHFHYVIVGGVVFALLAG), 420–440 (ITFWLFFIGFHLTFFIQHFLG), 463–483 (ISTIGAFFIAAATVILLINIV), 553–573 (SSFLPFVIAFGLFVAAFGFTY), and 577–597 (AGWGLPVAILGLLITLGSMFL). A Fe(II)-heme o-binding site is contributed by His-384. His-384 serves as a coordination point for heme a3. Position 386 (His-386) interacts with Fe(II)-heme a.

The protein belongs to the heme-copper respiratory oxidase family. Cu(2+) serves as cofactor. Heme is required as a cofactor.

The protein resides in the cell membrane. The catalysed reaction is 4 Fe(II)-[cytochrome c] + O2 + 8 H(+)(in) = 4 Fe(III)-[cytochrome c] + 2 H2O + 4 H(+)(out). The protein operates within energy metabolism; oxidative phosphorylation. Cytochrome c oxidase is the component of the respiratory chain that catalyzes the reduction of oxygen to water. Subunits 1-3 form the functional core of the enzyme complex. Co I is the catalytic subunit of the enzyme. Electrons originating in cytochrome c are transferred via the copper A center of subunit 2 and heme a of subunit 1 to the bimetallic center formed by heme a3 and copper B. This cytochrome c oxidase shows proton pump activity across the membrane in addition to the electron transfer. This is Cytochrome c oxidase subunit 1 (ctaD) from Bacillus sp. (strain PS3).